The following is an 846-amino-acid chain: Disrupted in schizophrenia 1 homolog (846 aa).

5 disordered regions span residues 1–53 (MQGA…IGFL), 127–147 (HSGV…GDSG), 231–257 (EAEP…GEPR), 277–312 (TRSN…QDGG), and 409–436 (LHGA…AQDS). An interaction with MAP1A region spans residues 1 to 288 (MQGAGSRGAW…SNRQPECGMV (288 aa)). Composition is skewed to basic and acidic residues over residues 133–143 (GNDRRQSERLT) and 248–257 (GSDRPHGEPR). Residues 277–300 (TRSNRQPECGMVSSSDAGFSSQDA) are compositionally biased toward polar residues. Residues 289 to 686 (SSSDAGFSSQ…LERVWKADLE (398 aa)) are interaction with TRAF3IP1. Residues 429–587 (RRTTAQDSLP…LLEAKMLALS (159 aa)) are required for localization to punctate cytoplasmic foci. The segment at 435 to 846 (DSLPGLAVTR…STAGAQEAED (412 aa)) is necessary and sufficient for interaction with PCNT and localization at the centrosome. The stretch at 440-489 (LAVTRRDWLMREKEQLQKEIEALRARVSVLEAKEQRLSQELEDQEMLLRW) forms a coiled coil. Residues 588-846 (GSCFSTAKEL…STAGAQEAED (259 aa)) form an interaction with ATF4 and ATF5 region. Residues 721-846 (TAALAVPRTP…STAGAQEAED (126 aa)) are interaction with NDEL1 and PAFAH1B1. The interval 721 to 846 (TAALAVPRTP…STAGAQEAED (126 aa)) is interaction with PAFAH1B1. Residues 795–828 (GHDEALFQSLQGELQMVKETLQTMFLQLQPAKEA) are interaction with NDEL1.

In terms of assembly, interacts with NDEL1. Interacts with CCDC88A (via C-terminus); the interaction is direct. Interacts with GSK3B. Interacts with tubulin alpha, ACTN2, ANKHD1, ATF4, ATF5, CEP63, EIF3S3, MAP1A, NDEL1, PAFAH1B1, RANBP9, SPTBN4, SYNE1 and TRAF3IP1. Interaction with microtubules may be mediated in part by TRAF3IP1. Interacts (via C-terminal) with PCNT. Interacts with CHCHD6. Interacts with CCDC141. Interacts with FBXW7, the substrate-recognition component of a SCF (SKP1-CUL1-F-box protein) E3 ubiquitin-protein ligase complex; the interaction targets DISC1 for proteasomal degradation. Interacts with ZNF365. Interacts with ATF4; inhibiting ATF4 transcription factor activity by disrupting ATF4 dimerization and DNA-binding. Interacts with PDE4B. In terms of processing, ubiquitinated. Ubiquitination with 'Lys-48'-linked polyubiquitin chains leads to its proteasomal degradation. Expressed in brain, heart, kidney, liver and thymus. Within the brain expression is high in the cerebral cortex, hippocampus and olfactory bulb and is also seen at lower levels in the cerebellum (at protein level).

Its subcellular location is the cytoplasm. It localises to the cytoskeleton. The protein resides in the mitochondrion. The protein localises to the microtubule organizing center. It is found in the centrosome. Its subcellular location is the postsynaptic density. Involved in the regulation of multiple aspects of embryonic and adult neurogenesis. Required for neural progenitor proliferation in the ventrical/subventrical zone during embryonic brain development and in the adult dentate gyrus of the hippocampus. Participates in the Wnt-mediated neural progenitor proliferation as a positive regulator by modulating GSK3B activity and CTNNB1 abundance. Plays a role as a modulator of the AKT-mTOR signaling pathway controlling the tempo of the process of newborn neurons integration during adult neurogenesis, including neuron positioning, dendritic development and synapse formation. Inhibits the activation of AKT-mTOR signaling upon interaction with CCDC88A. Regulates the migration of early-born granule cell precursors toward the dentate gyrus during the hippocampal development. Inhibits ATF4 transcription factor activity in neurons by disrupting ATF4 dimerization and DNA-binding. Plays a role, together with PCNT, in the microtubule network formation. This Rattus norvegicus (Rat) protein is Disrupted in schizophrenia 1 homolog.